A 381-amino-acid chain; its full sequence is Alkanesulfonate monooxygenase (381 aa).

It belongs to the SsuD family. In terms of assembly, homotetramer.

It catalyses the reaction an alkanesulfonate + FMNH2 + O2 = an aldehyde + FMN + sulfite + H2O + 2 H(+). Catalyzes the desulfonation of aliphatic sulfonates. The sequence is that of Alkanesulfonate monooxygenase from Escherichia coli O1:K1 / APEC.